The sequence spans 349 residues: Cell adhesion molecule CEACAM8 (349 aa).

Positions Met1 to Ala34 are cleaved as a signal peptide. An Ig-like V-type domain is found at Gln35–Pro142. N-linked (GlcNAc...) asparagine glycans are attached at residues Asn104, Asn111, Asn115, Asn152, Asn173, Asn197, Asn224, Asn256, Asn274, Asn288, and Asn309. Ig-like C2-type domains are found at residues Pro145–Asn232 and Pro237–Ser319. Cys167 and Cys215 form a disulfide bridge. Cys259 and Cys299 form a disulfide bridge. A lipid anchor (GPI-anchor amidated aspartate) is attached at Asp320. Residues Ala321–Ile349 constitute a propeptide, removed in mature form.

This sequence belongs to the immunoglobulin superfamily. CEA family. In terms of assembly, monomer. Heterodimer with CEACAM6; heterodimerizes via its Ig-like V-type domain. Post-translationally, glycosylated. Expressed in leukocytes of chronic myeloid Leukemia patients and bone marrow.

It localises to the cell membrane. Its subcellular location is the cell surface. Cell surface glycoprotein that plays a role in cell adhesion in a calcium-independent manner. Mediates heterophilic cell adhesion with other carcinoembryonic antigen-related cell adhesion molecules, such as CEACAM6. Heterophilic interaction with CEACAM8 occurs in activated neutrophils. The polypeptide is Cell adhesion molecule CEACAM8 (Homo sapiens (Human)).